A 403-amino-acid chain; its full sequence is Phosphopentomutase (403 aa).

The Mn(2+) site is built by D13, D298, H303, D339, H340, and H351.

It belongs to the phosphopentomutase family. The cofactor is Mn(2+).

It localises to the cytoplasm. It carries out the reaction 2-deoxy-alpha-D-ribose 1-phosphate = 2-deoxy-D-ribose 5-phosphate. It catalyses the reaction alpha-D-ribose 1-phosphate = D-ribose 5-phosphate. The protein operates within carbohydrate degradation; 2-deoxy-D-ribose 1-phosphate degradation; D-glyceraldehyde 3-phosphate and acetaldehyde from 2-deoxy-alpha-D-ribose 1-phosphate: step 1/2. Functionally, isomerase that catalyzes the conversion of deoxy-ribose 1-phosphate (dRib-1-P) and ribose 1-phosphate (Rib-1-P) to deoxy-ribose 5-phosphate (dRib-5-P) and ribose 5-phosphate (Rib-5-P), respectively. The protein is Phosphopentomutase of Streptococcus pyogenes serotype M4 (strain MGAS10750).